The following is a 437-amino-acid chain: Transcription factor TGAL5 (437 aa).

A disordered region spans residues 33 to 75; the sequence is QEPYSNSQSVGSTTDSSSAQNTMSQAELVSPASMRSDSGQEQQ. The segment covering 37-50 has biased composition (low complexity); sequence SNSQSVGSTTDSSS. Residues 51-75 are compositionally biased toward polar residues; it reads AQNTMSQAELVSPASMRSDSGQEQQ. The 45-residue stretch at 126–170 folds into the bZIP domain; that stretch reads DAKTERRLAQNREAARKSRLRKKAYVQQLETSRIRLQQIEQELQR. Positions 128–148 are basic motif; the sequence is KTERRLAQNREAARKSRLRKK. A leucine-zipper region spans residues 154–168; the sequence is LETSRIRLQQIEQEL. In terms of domain architecture, DOG1 spans 191–405; the sequence is AVMFDMDYTR…RALSSLWASR (215 aa).

This sequence belongs to the bZIP family. In terms of assembly, interacts with NPR5/NH4, NH5.1 and NH5.2.

It localises to the nucleus. In terms of biological role, transcriptional regulator involved in defense response. This is Transcription factor TGAL5 from Oryza sativa subsp. japonica (Rice).